We begin with the raw amino-acid sequence, 374 residues long: tRNA-specific 2-thiouridylase MnmA (374 aa).

ATP is bound by residues Gly17–Ser24 and Met43. Positions Asn103 to Asp105 are interaction with target base in tRNA. Cys108 serves as the catalytic Nucleophile. Cysteines 108 and 204 form a disulfide. Gly132 is an ATP binding site. Residues Lys154–Gln156 form an interaction with tRNA region. Cys204 functions as the Cysteine persulfide intermediate in the catalytic mechanism. Positions Arg316 to Tyr317 are interaction with tRNA.

It belongs to the MnmA/TRMU family.

It is found in the cytoplasm. It catalyses the reaction S-sulfanyl-L-cysteinyl-[protein] + uridine(34) in tRNA + AH2 + ATP = 2-thiouridine(34) in tRNA + L-cysteinyl-[protein] + A + AMP + diphosphate + H(+). In terms of biological role, catalyzes the 2-thiolation of uridine at the wobble position (U34) of tRNA, leading to the formation of s(2)U34. The protein is tRNA-specific 2-thiouridylase MnmA of Pseudomonas entomophila (strain L48).